The primary structure comprises 132 residues: Nickel-responsive regulator (132 aa).

Positions 76, 87, 89, and 95 each coordinate Ni(2+).

Belongs to the transcriptional regulatory CopG/NikR family. In terms of assembly, homotetramer. Requires Ni(2+) as cofactor.

Its function is as follows. Transcriptional repressor of the nikABCDE operon. Is active in the presence of excessive concentrations of intracellular nickel. This chain is Nickel-responsive regulator, found in Klebsiella pneumoniae subsp. pneumoniae (strain ATCC 700721 / MGH 78578).